The primary structure comprises 206 residues: Large ribosomal subunit protein mL62 (206 aa).

The N-terminal 29 residues, 1-29 (MAATRCLRWGLSRAGVWLLPPPARCPRRA), are a transit peptide targeting the mitochondrion. Gln90 is modified (N5-methylglutamine).

This sequence belongs to the prokaryotic/mitochondrial release factor family. Mitochondrion-specific ribosomal protein mL62 subfamily. As to quaternary structure, component of the mitochondrial large ribosomal subunit (mt-LSU). Mature mammalian 55S mitochondrial ribosomes consist of a small (28S) and a large (39S) subunit. The 28S small subunit contains a 12S ribosomal RNA (12S mt-rRNA) and 30 different proteins. The 39S large subunit contains a 16S rRNA (16S mt-rRNA), a copy of mitochondrial valine transfer RNA (mt-tRNA(Val)), which plays an integral structural role, and 52 different proteins. In terms of processing, methylation of glutamine in the GGQ triplet by HEMK1. In terms of tissue distribution, down-regulated during the in vitro differentiation of HT29-D4 colon carcinoma cells.

The protein resides in the mitochondrion. It carries out the reaction an N-acyl-L-alpha-aminoacyl-tRNA + H2O = an N-acyl-L-amino acid + a tRNA + H(+). In terms of biological role, essential peptidyl-tRNA hydrolase component of the mitochondrial large ribosomal subunit. Acts as a codon-independent translation release factor that has lost all stop codon specificity and directs the termination of translation in mitochondrion, possibly in case of abortive elongation. Involved in the hydrolysis of peptidyl-tRNAs that have been prematurely terminated and thus in the recycling of stalled mitochondrial ribosomes. The protein is Large ribosomal subunit protein mL62 of Homo sapiens (Human).